A 242-amino-acid chain; its full sequence is Uridylate kinase (242 aa).

15–18 (KLSG) lines the ATP pocket. The tract at residues 23-28 (GAEGFG) is involved in allosteric activation by GTP. Residue glycine 57 participates in UMP binding. The ATP site is built by glycine 58 and arginine 62. Residues aspartate 77 and 138–145 (TGNPFFTT) each bind UMP. 3 residues coordinate ATP: threonine 165, tyrosine 171, and aspartate 174.

This sequence belongs to the UMP kinase family. In terms of assembly, homohexamer.

It is found in the cytoplasm. It carries out the reaction UMP + ATP = UDP + ADP. It participates in pyrimidine metabolism; CTP biosynthesis via de novo pathway; UDP from UMP (UMPK route): step 1/1. Allosterically activated by GTP. Inhibited by UTP. Functionally, catalyzes the reversible phosphorylation of UMP to UDP. The chain is Uridylate kinase from Photorhabdus laumondii subsp. laumondii (strain DSM 15139 / CIP 105565 / TT01) (Photorhabdus luminescens subsp. laumondii).